Reading from the N-terminus, the 201-residue chain is MAGPQRRGSGAGGGERRDRKGRDGGASAAEKTAYVERVVAINRVAKVVKGGRRFSFTALVVVGDGDGTVGVGYGKAKEVPAAIAKGVEEAKKNFFKVPRIQGTIPHPITGEKAAGVVLLKPASPGTGVIAGGPVRAVLECAGVHDILSKSLGSSNAINIVHATVAALQGLQRPEEIAARRGLPLEDVAPAALLRARAGAGA.

The disordered stretch occupies residues 1–28 (MAGPQRRGSGAGGGERRDRKGRDGGASA). The segment covering 14–23 (GERRDRKGRD) has biased composition (basic and acidic residues). In terms of domain architecture, S5 DRBM spans 34-97 (YVERVVAINR…EEAKKNFFKV (64 aa)).

This sequence belongs to the universal ribosomal protein uS5 family. Part of the 30S ribosomal subunit. Contacts proteins S4 and S8.

With S4 and S12 plays an important role in translational accuracy. Functionally, located at the back of the 30S subunit body where it stabilizes the conformation of the head with respect to the body. This chain is Small ribosomal subunit protein uS5, found in Streptomyces griseus subsp. griseus (strain JCM 4626 / CBS 651.72 / NBRC 13350 / KCC S-0626 / ISP 5235).